The primary structure comprises 31 residues: Cytochrome b6-f complex subunit 6 (31 aa).

The helical transmembrane segment at Leu-4–Gly-24 threads the bilayer.

It belongs to the PetL family. The 4 large subunits of the cytochrome b6-f complex are cytochrome b6, subunit IV (17 kDa polypeptide, PetD), cytochrome f and the Rieske protein, while the 4 small subunits are PetG, PetL, PetM and PetN. The complex functions as a dimer.

Its subcellular location is the plastid. The protein resides in the chloroplast thylakoid membrane. Functionally, component of the cytochrome b6-f complex, which mediates electron transfer between photosystem II (PSII) and photosystem I (PSI), cyclic electron flow around PSI, and state transitions. PetL is important for photoautotrophic growth as well as for electron transfer efficiency and stability of the cytochrome b6-f complex. In Agrostis stolonifera (Creeping bentgrass), this protein is Cytochrome b6-f complex subunit 6.